The primary structure comprises 478 residues: ATP synthase subunit beta (478 aa).

Position 158–165 (158–165 (GGAGVGKT)) interacts with ATP.

It belongs to the ATPase alpha/beta chains family. In terms of assembly, F-type ATPases have 2 components, CF(1) - the catalytic core - and CF(0) - the membrane proton channel. CF(1) has five subunits: alpha(3), beta(3), gamma(1), delta(1), epsilon(1). CF(0) has three main subunits: a(1), b(2) and c(9-12). The alpha and beta chains form an alternating ring which encloses part of the gamma chain. CF(1) is attached to CF(0) by a central stalk formed by the gamma and epsilon chains, while a peripheral stalk is formed by the delta and b chains.

The protein localises to the cell inner membrane. It carries out the reaction ATP + H2O + 4 H(+)(in) = ADP + phosphate + 5 H(+)(out). Its function is as follows. Produces ATP from ADP in the presence of a proton gradient across the membrane. The catalytic sites are hosted primarily by the beta subunits. The chain is ATP synthase subunit beta from Rhizobium johnstonii (strain DSM 114642 / LMG 32736 / 3841) (Rhizobium leguminosarum bv. viciae).